Reading from the N-terminus, the 392-residue chain is Glycerophosphodiester phosphodiesterase GDPD5 (392 aa).

The N-terminal stretch at 1–21 (MILTRCLPLIWLSLLTVCAAG) is a signal peptide. Residues 44–362 (PYNIAHRGSN…DFTGSLHNFQ (319 aa)) form the GP-PDE domain. N-linked (GlcNAc...) asparagine glycosylation is found at Asn120, Asn239, Asn260, and Asn329.

This sequence belongs to the glycerophosphoryl diester phosphodiesterase family. As to expression, expressed in roots, rosette and cauline leaves, stems, flowers and siliques.

The protein localises to the secreted. It localises to the cell wall. Its subcellular location is the vacuole. It carries out the reaction a sn-glycero-3-phosphodiester + H2O = an alcohol + sn-glycerol 3-phosphate + H(+). The chain is Glycerophosphodiester phosphodiesterase GDPD5 from Arabidopsis thaliana (Mouse-ear cress).